The primary structure comprises 556 residues: 2-succinyl-5-enolpyruvyl-6-hydroxy-3-cyclohexene-1-carboxylate synthase (556 aa).

Belongs to the TPP enzyme family. MenD subfamily. As to quaternary structure, homodimer. The cofactor is Mg(2+). Requires Mn(2+) as cofactor. It depends on thiamine diphosphate as a cofactor.

The catalysed reaction is isochorismate + 2-oxoglutarate + H(+) = 5-enolpyruvoyl-6-hydroxy-2-succinyl-cyclohex-3-ene-1-carboxylate + CO2. The protein operates within quinol/quinone metabolism; 1,4-dihydroxy-2-naphthoate biosynthesis; 1,4-dihydroxy-2-naphthoate from chorismate: step 2/7. Its pathway is quinol/quinone metabolism; menaquinone biosynthesis. In terms of biological role, catalyzes the thiamine diphosphate-dependent decarboxylation of 2-oxoglutarate and the subsequent addition of the resulting succinic semialdehyde-thiamine pyrophosphate anion to isochorismate to yield 2-succinyl-5-enolpyruvyl-6-hydroxy-3-cyclohexene-1-carboxylate (SEPHCHC). This Staphylococcus epidermidis (strain ATCC 12228 / FDA PCI 1200) protein is 2-succinyl-5-enolpyruvyl-6-hydroxy-3-cyclohexene-1-carboxylate synthase.